We begin with the raw amino-acid sequence, 238 residues long: Large ribosomal subunit protein bL17m (238 aa).

This sequence belongs to the bacterial ribosomal protein bL17 family. In terms of assembly, component of the mitochondrial large ribosomal subunit (mt-LSU). Mature yeast 74S mitochondrial ribosomes consist of a small (37S) and a large (54S) subunit. The 37S small subunit contains a 15S ribosomal RNA (15S mt-rRNA) and 34 different proteins. The 54S large subunit contains a 21S rRNA (21S mt-rRNA) and 46 different proteins.

It localises to the mitochondrion. In terms of biological role, component of the mitochondrial ribosome (mitoribosome), a dedicated translation machinery responsible for the synthesis of mitochondrial genome-encoded proteins, including at least some of the essential transmembrane subunits of the mitochondrial respiratory chain. The mitoribosomes are attached to the mitochondrial inner membrane and translation products are cotranslationally integrated into the membrane. The chain is Large ribosomal subunit protein bL17m (MRPL8) from Saccharomyces cerevisiae (strain ATCC 204508 / S288c) (Baker's yeast).